An 802-amino-acid polypeptide reads, in one-letter code: Bifunctional purine biosynthetic protein ADE5,7 (802 aa).

The segment at 1 to 450 is GARS; sequence MLNILVLGNG…QNSESSKVAI (450 aa). Positions 114 to 330 constitute an ATP-grasp domain; sequence KRFMSKHNIP…LAQVFLAAAE (217 aa). 141–203 lines the ATP pocket; sequence QAHTDKAFVI…EQFLEGDEIS (63 aa). Mg(2+) contacts are provided by glutamate 298 and asparagine 300. The tract at residues 451–802 is AIRS; sequence TYADSGVSVD…CVIENGTKLY (352 aa). Phosphoserine occurs at positions 455 and 458.

In the N-terminal section; belongs to the GARS family. It in the C-terminal section; belongs to the AIR synthase family. Mg(2+) is required as a cofactor. The cofactor is Mn(2+).

It is found in the cytoplasm. It catalyses the reaction 5-phospho-beta-D-ribosylamine + glycine + ATP = N(1)-(5-phospho-beta-D-ribosyl)glycinamide + ADP + phosphate + H(+). The catalysed reaction is 2-formamido-N(1)-(5-O-phospho-beta-D-ribosyl)acetamidine + ATP = 5-amino-1-(5-phospho-beta-D-ribosyl)imidazole + ADP + phosphate + H(+). The protein operates within purine metabolism; IMP biosynthesis via de novo pathway; 5-amino-1-(5-phospho-D-ribosyl)imidazole from N(2)-formyl-N(1)-(5-phospho-D-ribosyl)glycinamide: step 2/2. Its pathway is purine metabolism; IMP biosynthesis via de novo pathway; N(1)-(5-phospho-D-ribosyl)glycinamide from 5-phospho-alpha-D-ribose 1-diphosphate: step 2/2. Functionally, catalyzes the second and fifth step in the 'de novo' purine biosynthesis pathway; contains phosphoribosylamine--glycine ligase (GARS) and phosphoribosylformylglycinamidine cyclo-ligase (AIRS) activities. In Saccharomyces cerevisiae (strain ATCC 204508 / S288c) (Baker's yeast), this protein is Bifunctional purine biosynthetic protein ADE5,7.